A 356-amino-acid chain; its full sequence is UDP-N-acetylglucosamine--N-acetylmuramyl-(pentapeptide) pyrophosphoryl-undecaprenol N-acetylglucosamine transferase (356 aa).

UDP-N-acetyl-alpha-D-glucosamine-binding positions include 15 to 17 (TGG), Asn127, Arg163, Ser191, Ile244, 263 to 268 (ALTVSE), and Gln288.

The protein belongs to the glycosyltransferase 28 family. MurG subfamily.

The protein resides in the cell inner membrane. It carries out the reaction di-trans,octa-cis-undecaprenyl diphospho-N-acetyl-alpha-D-muramoyl-L-alanyl-D-glutamyl-meso-2,6-diaminopimeloyl-D-alanyl-D-alanine + UDP-N-acetyl-alpha-D-glucosamine = di-trans,octa-cis-undecaprenyl diphospho-[N-acetyl-alpha-D-glucosaminyl-(1-&gt;4)]-N-acetyl-alpha-D-muramoyl-L-alanyl-D-glutamyl-meso-2,6-diaminopimeloyl-D-alanyl-D-alanine + UDP + H(+). It participates in cell wall biogenesis; peptidoglycan biosynthesis. Cell wall formation. Catalyzes the transfer of a GlcNAc subunit on undecaprenyl-pyrophosphoryl-MurNAc-pentapeptide (lipid intermediate I) to form undecaprenyl-pyrophosphoryl-MurNAc-(pentapeptide)GlcNAc (lipid intermediate II). This chain is UDP-N-acetylglucosamine--N-acetylmuramyl-(pentapeptide) pyrophosphoryl-undecaprenol N-acetylglucosamine transferase, found in Yersinia pseudotuberculosis serotype O:1b (strain IP 31758).